The chain runs to 612 residues: Dihydroxy-acid dehydratase (612 aa).

Aspartate 81 serves as a coordination point for Mg(2+). Residue cysteine 122 coordinates [2Fe-2S] cluster. Positions 123 and 124 each coordinate Mg(2+). Residue lysine 124 is modified to N6-carboxylysine. Cysteine 195 serves as a coordination point for [2Fe-2S] cluster. A Mg(2+)-binding site is contributed by glutamate 492. Serine 518 functions as the Proton acceptor in the catalytic mechanism.

It belongs to the IlvD/Edd family. As to quaternary structure, homodimer. [2Fe-2S] cluster is required as a cofactor. It depends on Mg(2+) as a cofactor.

It catalyses the reaction (2R)-2,3-dihydroxy-3-methylbutanoate = 3-methyl-2-oxobutanoate + H2O. It carries out the reaction (2R,3R)-2,3-dihydroxy-3-methylpentanoate = (S)-3-methyl-2-oxopentanoate + H2O. It participates in amino-acid biosynthesis; L-isoleucine biosynthesis; L-isoleucine from 2-oxobutanoate: step 3/4. The protein operates within amino-acid biosynthesis; L-valine biosynthesis; L-valine from pyruvate: step 3/4. In terms of biological role, functions in the biosynthesis of branched-chain amino acids. Catalyzes the dehydration of (2R,3R)-2,3-dihydroxy-3-methylpentanoate (2,3-dihydroxy-3-methylvalerate) into 2-oxo-3-methylpentanoate (2-oxo-3-methylvalerate) and of (2R)-2,3-dihydroxy-3-methylbutanoate (2,3-dihydroxyisovalerate) into 2-oxo-3-methylbutanoate (2-oxoisovalerate), the penultimate precursor to L-isoleucine and L-valine, respectively. The chain is Dihydroxy-acid dehydratase from Kocuria rhizophila (strain ATCC 9341 / DSM 348 / NBRC 103217 / DC2201).